Reading from the N-terminus, the 240-residue chain is Transcriptional regulatory protein rxt2 (240 aa).

Belongs to the RXT2 family. In terms of assembly, component of the RPD3C(L) complex.

The protein localises to the nucleus. Component of the RPD3C(L) histone deacetylase complex (HDAC) responsible for the deacetylation of lysine residues on the N-terminal part of the core histones (H2A, H2B, H3 and H4). Histone deacetylation gives a tag for epigenetic repression and plays an important role in transcriptional regulation, cell cycle progression and developmental events. In Schizosaccharomyces pombe (strain 972 / ATCC 24843) (Fission yeast), this protein is Transcriptional regulatory protein rxt2 (rtx2).